We begin with the raw amino-acid sequence, 1187 residues long: Protein WWC2 (1187 aa).

2 WW domains span residues 10–43 (LPLP…DPRD) and 57–90 (DELP…DPRK). Coiled-coil stretches lie at residues 121-194 (KEQR…YKQQ) and 224-256 (ELKS…FHLD). Phosphoserine is present on S286. Residues 302 to 423 (LAEKVRLSLQ…EETTKLTTSL (122 aa)) adopt a coiled-coil conformation. The segment at 438–464 (SSGSSLGSLASSRGSLNTSSRGSLNSL) is disordered. A C2 domain is found at 697–820 (ETAQVQIGLR…FSNEIFMLWY (124 aa)). 2 disordered regions span residues 830-849 (CKKN…QPML) and 874-963 (ELAQ…ETNT). A coiled-coil region spans residues 859-885 (ALLARTSAELLAVEQELAQEEEEEELR). Over residues 875–884 (LAQEEEEEEL) the composition is skewed to acidic residues. T999 is subject to Phosphothreonine. S1017 carries the phosphoserine modification. The interval 1026–1045 (SLFVRNSTERRSLRVKRAVC) is interaction with PRKCZ. A coiled-coil region spans residues 1063–1143 (DLELDLQASL…DLNAERLMRQ (81 aa)).

Belongs to the WWC family. Forms homodimers and heterodimers with WWC1 and WWC3. Interacts with DLC1 and PRKCZ. Interacts (via WW domains) with LATS1 and LATS2.

It is found in the cytoplasm. Its subcellular location is the cytosol. Functionally, regulator of the Hippo signaling pathway, also known as the Salvador-Warts-Hippo (SWH) pathway. Enhances phosphorylation of LATS1 and YAP1 and negatively regulates cell proliferation and organ growth due to a suppression of the transcriptional activity of YAP1, the major effector of the Hippo pathway. This is Protein WWC2 (Wwc2) from Mus musculus (Mouse).